A 255-amino-acid polypeptide reads, in one-letter code: Fasciclin-like arabinogalactan protein 14 (255 aa).

An N-terminal signal peptide occupies residues 1–23 (MSSSLTIFFFFFASTFLYTSSNS). The FAS1 domain maps to 24–169 (FNITNILNEH…ISVLHISSAI (146 aa)). N25, N99, N125, and N159 each carry an N-linked (GlcNAc...) asparagine glycan. The tract at residues 179-231 (PTASPLSPVSSPPRPAESPNDDGQDFDEPPSSAPGAAADEPSENAGSANGVSR) is disordered. The span at 197-206 (PNDDGQDFDE) shows a compositional bias: acidic residues. Over residues 222-231 (NAGSANGVSR) the composition is skewed to polar residues. A lipid anchor (GPI-anchor amidated serine) is attached at S225. Residues 226-255 (ANGVSRNDSQPAFAFTLLMSFIWWFMARLR) constitute a propeptide, removed in mature form.

This sequence belongs to the fasciclin-like AGP family.

It localises to the cell membrane. May be a cell surface adhesion protein. In Arabidopsis thaliana (Mouse-ear cress), this protein is Fasciclin-like arabinogalactan protein 14 (FLA14).